We begin with the raw amino-acid sequence, 92 residues long: YcgL domain-containing protein PBPRA1080 (92 aa).

The 84-residue stretch at 1 to 84 (MLCSIYKSSK…PVTNLLHQYK (84 aa)) folds into the YcgL domain.

The polypeptide is YcgL domain-containing protein PBPRA1080 (Photobacterium profundum (strain SS9)).